A 384-amino-acid polypeptide reads, in one-letter code: Beta-ureidopropionase (384 aa).

The 273-residue stretch at 72 to 344 (VHVGLVQNRI…DGLLVAKLDL (273 aa)) folds into the CN hydrolase domain. Glu119 serves as the catalytic Proton acceptor. The active-site Proton donor is Lys196. Catalysis depends on Cys233, which acts as the Nucleophile. Ser378 is subject to Phosphoserine.

It belongs to the carbon-nitrogen hydrolase superfamily. BUP family. As to quaternary structure, homodimer, homotetramer, homooctamer; can also form higher homooligomers.

It is found in the cytoplasm. The catalysed reaction is 3-(carbamoylamino)propanoate + H2O + 2 H(+) = beta-alanine + NH4(+) + CO2. The enzyme catalyses 3-(carbamoylamino)-2-methylpropanoate + H2O + 2 H(+) = (R)-3-amino-2-methylpropanoate + NH4(+) + CO2. The protein operates within amino-acid biosynthesis; beta-alanine biosynthesis. Functionally, catalyzes a late step in pyrimidine degradation. Converts N-carbamoyl-beta-alanine (3-ureidopropanoate) into beta-alanine, ammonia and carbon dioxide. Likewise, converts N-carbamoyl-beta-aminoisobutyrate (3-ureidoisobutyrate) into beta-aminoisobutyrate, ammonia and carbon dioxide. In Pongo abelii (Sumatran orangutan), this protein is Beta-ureidopropionase (UPB1).